The sequence spans 96 residues: MNIFKIFFILNYTIIFLIKIYQNTFSKLFGQQCIYKPTCSKYSIECLKKYNFLTALVLMTLRTIRCNALFKGGNDFIPKYNPISTSLKEFQKRLIK.

It belongs to the UPF0161 family.

The protein resides in the cell inner membrane. In terms of biological role, could be involved in insertion of integral membrane proteins into the membrane. The sequence is that of Putative membrane protein insertion efficiency factor from Borreliella afzelii (strain PKo) (Borrelia afzelii).